The sequence spans 312 residues: Formimidoylglutamase (312 aa).

Positions 128, 153, 155, 157, 240, and 242 each coordinate Mn(2+).

This sequence belongs to the arginase family. The cofactor is Mn(2+).

It carries out the reaction N-formimidoyl-L-glutamate + H2O = formamide + L-glutamate. It participates in amino-acid degradation; L-histidine degradation into L-glutamate; L-glutamate from N-formimidoyl-L-glutamate (hydrolase route): step 1/1. Its function is as follows. Catalyzes the conversion of N-formimidoyl-L-glutamate to L-glutamate and formamide. The protein is Formimidoylglutamase of Enterobacter sp. (strain 638).